The chain runs to 467 residues: Probable rhamnogalacturonase A (467 aa).

Residues 1–19 (MHSLSLISLALLSPLLVNA) form the signal peptide. Cys-40 and Cys-66 are disulfide-bonded. Residue Asp-217 is the Proton donor of the active site. Cys-219 and Cys-236 are oxidised to a cystine. 2 N-linked (GlcNAc...) asparagine glycosylation sites follow: Asn-237 and Asn-252. Residue His-292 is part of the active site. Residue Asn-319 is glycosylated (N-linked (GlcNAc...) asparagine). Intrachain disulfides connect Cys-342/Cys-348 and Cys-370/Cys-379.

This sequence belongs to the glycosyl hydrolase 28 family.

The protein resides in the secreted. The enzyme catalyses Endohydrolysis of alpha-D-GalA-(1-&gt;2)-alpha-L-Rha glycosidic bond in the rhamnogalacturonan I backbone with initial inversion of anomeric configuration releasing oligosaccharides with beta-D-GalA at the reducing end.. Functionally, pectinolytic enzymes consist of four classes of enzymes: pectine lyase, polygalacturonase, pectin methylesterase and rhamnogalacturonase. Hydrolyzes alpha-D-galacturonopyranosyl-(1,2)-alpha-L-rhamnopyranosyl linkages in the backbone of the hairy regions of pectins. This is Probable rhamnogalacturonase A (rhgA) from Aspergillus oryzae (strain ATCC 42149 / RIB 40) (Yellow koji mold).